The primary structure comprises 284 residues: Bifunctional protein FolD (284 aa).

NADP(+)-binding positions include 165–167 (GAS), Ser-190, and Ile-231.

This sequence belongs to the tetrahydrofolate dehydrogenase/cyclohydrolase family. In terms of assembly, homodimer.

The enzyme catalyses (6R)-5,10-methylene-5,6,7,8-tetrahydrofolate + NADP(+) = (6R)-5,10-methenyltetrahydrofolate + NADPH. It carries out the reaction (6R)-5,10-methenyltetrahydrofolate + H2O = (6R)-10-formyltetrahydrofolate + H(+). Its pathway is one-carbon metabolism; tetrahydrofolate interconversion. Its function is as follows. Catalyzes the oxidation of 5,10-methylenetetrahydrofolate to 5,10-methenyltetrahydrofolate and then the hydrolysis of 5,10-methenyltetrahydrofolate to 10-formyltetrahydrofolate. This Polynucleobacter asymbioticus (strain DSM 18221 / CIP 109841 / QLW-P1DMWA-1) (Polynucleobacter necessarius subsp. asymbioticus) protein is Bifunctional protein FolD.